A 254-amino-acid polypeptide reads, in one-letter code: Nickel import ATP-binding protein NikD (254 aa).

The 240-residue stretch at 2-241 folds into the ABC transporter domain; that stretch reads PQQIELRNIA…PKHTVTRSLV (240 aa). 36 to 43 provides a ligand contact to ATP; it reads GGSGSGKS.

Belongs to the ABC transporter superfamily. Nickel importer (TC 3.A.1.5.3) family. The complex is composed of two ATP-binding proteins (NikD and NikE), two transmembrane proteins (NikB and NikC) and a solute-binding protein (NikA).

The protein localises to the cell inner membrane. The enzyme catalyses Ni(2+)(out) + ATP + H2O = Ni(2+)(in) + ADP + phosphate + H(+). Functionally, part of the ABC transporter complex NikABCDE involved in nickel import. Responsible for energy coupling to the transport system. This chain is Nickel import ATP-binding protein NikD, found in Shigella boydii serotype 4 (strain Sb227).